A 176-amino-acid chain; its full sequence is Cystatin-related protein 2 (176 aa).

An N-terminal signal peptide occupies residues 1 to 26; sequence MYKTLCGTQLLLAIFVLFLNFSHATA. Positions 27-30 are excised as a propeptide; the sequence is KGTR. Asparagine 71 carries an N-linked (GlcNAc...) asparagine glycan. Intrachain disulfides connect cysteine 129–cysteine 139 and cysteine 153–cysteine 173.

Belongs to the cystatin family. As to expression, prostate.

This is Cystatin-related protein 2 (Crp2) from Rattus norvegicus (Rat).